Here is a 425-residue protein sequence, read N- to C-terminus: Potassium/proton antiporter CemA (425 aa).

A helical membrane pass occupies residues 89 to 109 (LFLTTVKCLFILLFVPLGINF). The insert stretch occupies residues 159 to 278 (LSENQIFFGL…KTDFASVFRT (120 aa)). A disordered region spans residues 173–192 (STFPSSEKSQKSEHFSNQDE). Residues 180-192 (KSQKSEHFSNQDE) show a composition bias toward basic and acidic residues. The next 3 helical transmembrane spans lie at 300–320 (IEAI…CYLL), 350–370 (ILFI…ELFF), and 386–406 (IFLL…YLIF).

Belongs to the CemA family.

It is found in the plastid. The protein resides in the chloroplast inner membrane. It carries out the reaction K(+)(in) + H(+)(out) = K(+)(out) + H(+)(in). Functionally, contributes to K(+)/H(+) antiport activity by supporting proton efflux to control proton extrusion and homeostasis in chloroplasts in a light-dependent manner to modulate photosynthesis. Prevents excessive induction of non-photochemical quenching (NPQ) under continuous-light conditions. Indirectly promotes efficient inorganic carbon uptake into chloroplasts. The protein is Potassium/proton antiporter CemA of Tetradesmus obliquus (Green alga).